A 715-amino-acid polypeptide reads, in one-letter code: Interferon-induced GTP-binding protein Mx2 (715 aa).

Basic residues predominate over residues 1 to 14 (MSKAHKSWPHRRRN). Disordered regions lie at residues 1–24 (MSKA…SLKK) and 69–88 (NNQP…PENN). Over residues 69 to 80 (NNQPLPGNTSQP) the composition is skewed to polar residues. Residues 115–387 (DLALPAIAVI…LITHIQKSLP (273 aa)) enclose the Dynamin-type G domain. A G1 motif region spans residues 125-132 (GDQSSGKS). 125–132 (GDQSSGKS) is a binding site for GTP. Residues 150-152 (VTR) form a G2 motif region. The tract at residues 225–228 (DLPG) is G3 motif. GTP is bound by residues 225 to 229 (DLPGI) and 294 to 297 (TKPD). The interval 294 to 297 (TKPD) is G4 motif. The interval 326–329 (KCRG) is G5 motif. The GED domain occupies 623 to 714 (FNEIGVHLNA…ALCQFSSKEI (92 aa)).

The protein belongs to the TRAFAC class dynamin-like GTPase superfamily. Dynamin/Fzo/YdjA family.

It localises to the cytoplasm. The protein localises to the nucleus. Functionally, interferon-induced dynamin-like GTPase with antiviral activity. In Macaca mulatta (Rhesus macaque), this protein is Interferon-induced GTP-binding protein Mx2 (MX2).